The chain runs to 514 residues: Cardiolipin synthase 2 (514 aa).

The next 3 membrane-spanning stretches (helical) occupy residues L7–V27, I41–F61, and L71–F91. 2 consecutive PLD phosphodiesterase domains span residues I249–Y276 and E427–S454. Residues H254, K256, D261, H432, K434, and D439 contribute to the active site.

The protein belongs to the phospholipase D family. Cardiolipin synthase subfamily.

The protein resides in the cell membrane. The enzyme catalyses 2 a 1,2-diacyl-sn-glycero-3-phospho-(1'-sn-glycerol) = a cardiolipin + glycerol. In terms of biological role, catalyzes the reversible phosphatidyl group transfer from one phosphatidylglycerol molecule to another to form cardiolipin (CL) (diphosphatidylglycerol) and glycerol. The polypeptide is Cardiolipin synthase 2 (cls2) (Bacillus anthracis).